Reading from the N-terminus, the 1680-residue chain is GRIP and coiled-coil domain-containing protein 2 (1680 aa).

M1 carries the post-translational modification N-acetylmethionine. Over residues 1–14 (MEDSAPDAVAAAPS) the composition is skewed to low complexity. 2 disordered regions span residues 1–23 (MEDSAPDAVAAAPSGTPKSKLET) and 1468–1522 (KSEP…SSAG). A coiled-coil region spans residues 31–1614 (KFAKKQMMLL…REKSVANLEY (1584 aa)). Over residues 1469-1484 (SEPSTRSPASSHQPSK) the composition is skewed to polar residues. Phosphoserine occurs at positions 1475 and 1479. Positions 1570-1609 (HLNGLLRETEATNAILMEQIKLLKSEIRRLERNQEREKSV) are mediates interaction with RAB6A. The segment at 1570 to 1680 (HLNGLLRETE…SYLHSWSGLR (111 aa)) is mediates interaction with RAB9A. A GRIP domain is found at 1605 to 1655 (REKSVANLEYLKNVLLRFIFLKPGSERERLLPVIDTMLQLSPEEKGKLATV).

Homodimer. Interacts (via GRIP domain) with RAB6A (preferentially in its GTP-bound form). May interact (RAB6A-dependent) with ARL1; might be involved in GCC2 Golgi localization. Interacts (probably via GRIP domain) with RAB9A (preferentially in its GTP-bound form). Interacts with CLASP1 and CLASP2; recruits both proteins to membranes of the TGN. Interacts with STX16.

It is found in the cytoplasm. The protein localises to the golgi apparatus. The protein resides in the trans-Golgi network membrane. Functionally, golgin which probably tethers transport vesicles to the trans-Golgi network (TGN) and regulates vesicular transport between the endosomes and the Golgi. As a RAB9A effector it is involved in recycling of the mannose 6-phosphate receptor from the late endosomes to the TGN. May also play a role in transport between the recycling endosomes and the Golgi. Required for maintenance of the Golgi structure, it is involved in the biogenesis of noncentrosomal, Golgi-associated microtubules through recruitment of CLASP1 and CLASP2. The protein is GRIP and coiled-coil domain-containing protein 2 (Gcc2) of Mus musculus (Mouse).